A 139-amino-acid polypeptide reads, in one-letter code: Putative pre-16S rRNA nuclease (139 aa).

Belongs to the YqgF nuclease family.

The protein resides in the cytoplasm. In terms of biological role, could be a nuclease involved in processing of the 5'-end of pre-16S rRNA. The chain is Putative pre-16S rRNA nuclease from Streptococcus agalactiae serotype Ia (strain ATCC 27591 / A909 / CDC SS700).